The following is a 250-amino-acid chain: Probable transcriptional regulatory protein Ppha_0657 (250 aa).

This sequence belongs to the TACO1 family.

It is found in the cytoplasm. This is Probable transcriptional regulatory protein Ppha_0657 from Pelodictyon phaeoclathratiforme (strain DSM 5477 / BU-1).